A 432-amino-acid chain; its full sequence is Eukaryotic translation initiation factor 3 subunit M (432 aa).

In terms of domain architecture, PCI spans 184-356 (EEEEAYQHIL…KVFLIHSVRY (173 aa)). Basic and acidic residues-rich tracts occupy residues 392–401 (AQQEAERKLV) and 423–432 (QHRERNDNDD). Positions 392–432 (AQQEAERKLVEASTQHNNDRGNQRRGGNRGQQHRERNDNDD) are disordered.

The protein belongs to the eIF-3 subunit M family. Component of the eukaryotic translation initiation factor 3 (eIF-3) complex.

The protein localises to the cytoplasm. In terms of biological role, component of the eukaryotic translation initiation factor 3 (eIF-3) complex, which is involved in protein synthesis of a specialized repertoire of mRNAs and, together with other initiation factors, stimulates binding of mRNA and methionyl-tRNAi to the 40S ribosome. The eIF-3 complex specifically targets and initiates translation of a subset of mRNAs involved in cell proliferation. In Pyricularia oryzae (strain 70-15 / ATCC MYA-4617 / FGSC 8958) (Rice blast fungus), this protein is Eukaryotic translation initiation factor 3 subunit M.